The chain runs to 463 residues: Glutamate--tRNA ligase (463 aa).

Residues 8 to 18 carry the 'HIGH' region motif; sequence PSPTGYLHIGG. The short motif at 236-240 is the 'KMSKS' region element; the sequence is RLSKR. Position 239 (Lys239) interacts with ATP.

This sequence belongs to the class-I aminoacyl-tRNA synthetase family. Glutamate--tRNA ligase type 1 subfamily. Monomer.

It is found in the cytoplasm. It carries out the reaction tRNA(Glu) + L-glutamate + ATP = L-glutamyl-tRNA(Glu) + AMP + diphosphate. Functionally, catalyzes the attachment of glutamate to tRNA(Glu) in a two-step reaction: glutamate is first activated by ATP to form Glu-AMP and then transferred to the acceptor end of tRNA(Glu). The chain is Glutamate--tRNA ligase from Nitrosomonas eutropha (strain DSM 101675 / C91 / Nm57).